A 158-amino-acid chain; its full sequence is 2-C-methyl-D-erythritol 2,4-cyclodiphosphate synthase (158 aa).

A divalent metal cation-binding residues include D9 and H11. Residues D9–H11 and H35–S36 contribute to the 4-CDP-2-C-methyl-D-erythritol 2-phosphate site. H43 is a binding site for a divalent metal cation. Residues D57 to G59, F62 to D66, A101 to A107, T133 to E136, F140, and R143 contribute to the 4-CDP-2-C-methyl-D-erythritol 2-phosphate site.

It belongs to the IspF family. In terms of assembly, homotrimer. The cofactor is a divalent metal cation.

It carries out the reaction 4-CDP-2-C-methyl-D-erythritol 2-phosphate = 2-C-methyl-D-erythritol 2,4-cyclic diphosphate + CMP. It participates in isoprenoid biosynthesis; isopentenyl diphosphate biosynthesis via DXP pathway; isopentenyl diphosphate from 1-deoxy-D-xylulose 5-phosphate: step 4/6. Its function is as follows. Involved in the biosynthesis of isopentenyl diphosphate (IPP) and dimethylallyl diphosphate (DMAPP), two major building blocks of isoprenoid compounds. Catalyzes the conversion of 4-diphosphocytidyl-2-C-methyl-D-erythritol 2-phosphate (CDP-ME2P) to 2-C-methyl-D-erythritol 2,4-cyclodiphosphate (ME-CPP) with a corresponding release of cytidine 5-monophosphate (CMP). The chain is 2-C-methyl-D-erythritol 2,4-cyclodiphosphate synthase from Bacillus cereus (strain B4264).